We begin with the raw amino-acid sequence, 273 residues long: Chaperone protein PsaB (273 aa).

A signal peptide spans 1 to 31 (MKNLFFSAYKKVFSYITSIVIFMVSLPYAYS). C128 and C163 are disulfide-bonded.

It belongs to the periplasmic pilus chaperone family.

It localises to the periplasm. Its function is as follows. Required for the biogenesis of the pH 6 antigen. This is Chaperone protein PsaB (psaB) from Yersinia pestis.